Reading from the N-terminus, the 354-residue chain is MTALKNDRFLRALLKQPVDVTPVWMMRQAGRYLPEYRASRASAGDFMSLCKNPQFACEVTLQPLDRYPLDAAILFSDILTIPDAMGLGLYFETGEGPRFKKTVSTLADIEALPIPDAQQDLGYVMDAVSTIRRELNGRVPLIGFAGSPWTLATYMVEGGSSKDFRKSKAMLYDNPQAMHLLLDKLAQSVTSYLNGQILAGAQAVQIFDSWGGSLSSAAYQEFSLAYMRKIVNGLIRENDGRKVPVIVFTKGGGLWLESIAEIGADTLGLDWTCDIGEARQRVGNKVSLQGNMDPTVLYARPEAIRQEVARILASYGSGTGHVFNLGHGITPEVDPANAGAFINAVHELSAQYHQ.

Substrate-binding positions include 27 to 31 (RQAGR), Phe-46, Asp-77, Tyr-154, Ser-209, and His-327.

Belongs to the uroporphyrinogen decarboxylase family. As to quaternary structure, homodimer.

It is found in the cytoplasm. The enzyme catalyses uroporphyrinogen III + 4 H(+) = coproporphyrinogen III + 4 CO2. The protein operates within porphyrin-containing compound metabolism; protoporphyrin-IX biosynthesis; coproporphyrinogen-III from 5-aminolevulinate: step 4/4. Its function is as follows. Catalyzes the decarboxylation of four acetate groups of uroporphyrinogen-III to yield coproporphyrinogen-III. This is Uroporphyrinogen decarboxylase from Pseudomonas syringae pv. tomato (strain ATCC BAA-871 / DC3000).